The chain runs to 863 residues: Alanine--tRNA ligase (863 aa).

Zn(2+)-binding residues include His552, His556, Cys654, and His658.

Belongs to the class-II aminoacyl-tRNA synthetase family. It depends on Zn(2+) as a cofactor.

It is found in the cytoplasm. It carries out the reaction tRNA(Ala) + L-alanine + ATP = L-alanyl-tRNA(Ala) + AMP + diphosphate. Catalyzes the attachment of alanine to tRNA(Ala) in a two-step reaction: alanine is first activated by ATP to form Ala-AMP and then transferred to the acceptor end of tRNA(Ala). Also edits incorrectly charged Ser-tRNA(Ala) and Gly-tRNA(Ala) via its editing domain. This chain is Alanine--tRNA ligase, found in Nitrosomonas eutropha (strain DSM 101675 / C91 / Nm57).